The sequence spans 265 residues: Cytochrome c oxidase subunit 3 (265 aa).

The next 6 membrane-spanning stretches (helical) occupy residues 41–61, 85–105, 137–157, 162–182, 200–220, and 245–265; these read GGAT…FVWW, GFIL…WAFF, TLIL…ILAG, AVYA…FQGM, FFLA…FLIV, and WHFV…WGGI.

Belongs to the cytochrome c oxidase subunit 3 family. In terms of assembly, component of the cytochrome c oxidase (complex IV, CIV), a multisubunit enzyme composed of a catalytic core of 3 subunits and several supernumerary subunits. The complex exists as a monomer or a dimer and forms supercomplexes (SCs) in the inner mitochondrial membrane with ubiquinol-cytochrome c oxidoreductase (cytochrome b-c1 complex, complex III, CIII).

Its subcellular location is the mitochondrion inner membrane. The catalysed reaction is 4 Fe(II)-[cytochrome c] + O2 + 8 H(+)(in) = 4 Fe(III)-[cytochrome c] + 2 H2O + 4 H(+)(out). In terms of biological role, component of the cytochrome c oxidase, the last enzyme in the mitochondrial electron transport chain which drives oxidative phosphorylation. The respiratory chain contains 3 multisubunit complexes succinate dehydrogenase (complex II, CII), ubiquinol-cytochrome c oxidoreductase (cytochrome b-c1 complex, complex III, CIII) and cytochrome c oxidase (complex IV, CIV), that cooperate to transfer electrons derived from NADH and succinate to molecular oxygen, creating an electrochemical gradient over the inner membrane that drives transmembrane transport and the ATP synthase. Cytochrome c oxidase is the component of the respiratory chain that catalyzes the reduction of oxygen to water. Electrons originating from reduced cytochrome c in the intermembrane space (IMS) are transferred via the dinuclear copper A center (CU(A)) of subunit 2 and heme A of subunit 1 to the active site in subunit 1, a binuclear center (BNC) formed by heme A3 and copper B (CU(B)). The BNC reduces molecular oxygen to 2 water molecules using 4 electrons from cytochrome c in the IMS and 4 protons from the mitochondrial matrix. This chain is Cytochrome c oxidase subunit 3 (COX3), found in Triticum aestivum (Wheat).